The chain runs to 305 residues: MSQDTVAPALPDAPREVVLVTGISGSGKSVALHALEDAGFYCVDNLPPELLPQFLRLEQARTDGAMRRIAVAVDVRSARSLPALLPSLSQLGSEGVKVRAIFLDASTHALVRRFSETRRRHPLSTGAPGEALDQHRALTDAIELERELLADLREASTVLDTSQLRAAQLRAWVRQLVQAPAGALTLVFESFAFKHGVPLDADLVYDVRVLPNPHYIDELRPLTGRDAPVADYLQQQPEVGEMLGQIEAFLVRWLPAFEQDQRAYLTVAIGCTGGQHRSVYFVEQLARRFRDRGATLVRHRELDAL.

22–29 (GISGSGKS) is a binding site for ATP. 74 to 77 (DVRS) is a GTP binding site.

The protein belongs to the RapZ-like family.

Its function is as follows. Displays ATPase and GTPase activities. The protein is Nucleotide-binding protein Mpe_A3336 of Methylibium petroleiphilum (strain ATCC BAA-1232 / LMG 22953 / PM1).